The chain runs to 430 residues: Adenylosuccinate synthetase (430 aa).

Residues 13-19 (GDEGKGK) and 41-43 (GHT) contribute to the GTP site. Residue D14 is the Proton acceptor of the active site. Positions 14 and 41 each coordinate Mg(2+). IMP is bound by residues 14–17 (DEGK), 39–42 (NAGH), T130, R144, Q225, T240, and R304. Residue H42 is the Proton donor of the active site. Position 300-306 (300-306 (ATTGRAR)) interacts with substrate. GTP is bound by residues R306, 332 to 334 (KLD), and 414 to 416 (STG).

Belongs to the adenylosuccinate synthetase family. As to quaternary structure, homodimer. It depends on Mg(2+) as a cofactor.

It localises to the cytoplasm. The catalysed reaction is IMP + L-aspartate + GTP = N(6)-(1,2-dicarboxyethyl)-AMP + GDP + phosphate + 2 H(+). Its pathway is purine metabolism; AMP biosynthesis via de novo pathway; AMP from IMP: step 1/2. Its function is as follows. Plays an important role in the de novo pathway of purine nucleotide biosynthesis. Catalyzes the first committed step in the biosynthesis of AMP from IMP. This chain is Adenylosuccinate synthetase, found in Pseudomonas paraeruginosa (strain DSM 24068 / PA7) (Pseudomonas aeruginosa (strain PA7)).